The chain runs to 128 residues: Fluoride-specific ion channel FluC (128 aa).

Helical transmembrane passes span 4–24, 35–55, 67–87, and 99–119; these read VFLLIIGGAIGSALRFGVSTW, FGILSVNVIGSFLIGFCWSIA, FLFTGLFGGFTTFSSFALDTM, and LLNVLASNILGLIAVFLGIIL. Residues G74 and T77 each coordinate Na(+).

Belongs to the fluoride channel Fluc/FEX (TC 1.A.43) family.

The protein localises to the cell inner membrane. The catalysed reaction is fluoride(in) = fluoride(out). Its activity is regulated as follows. Na(+) is not transported, but it plays an essential structural role and its presence is essential for fluoride channel function. Fluoride-specific ion channel. Important for reducing fluoride concentration in the cell, thus reducing its toxicity. The polypeptide is Fluoride-specific ion channel FluC (Parabacteroides distasonis (strain ATCC 8503 / DSM 20701 / CIP 104284 / JCM 5825 / NCTC 11152)).